Here is a 276-residue protein sequence, read N- to C-terminus: Potassium/proton antiporter CemA (276 aa).

The next 3 membrane-spanning stretches (helical) occupy residues 59 to 79, 199 to 219, and 236 to 256; these read LLLL…WIFG, FFII…GWEV, and FIFL…KYWI.

This sequence belongs to the CemA family.

It localises to the plastid. The protein resides in the chloroplast inner membrane. The enzyme catalyses K(+)(in) + H(+)(out) = K(+)(out) + H(+)(in). Functionally, contributes to K(+)/H(+) antiport activity by supporting proton efflux to control proton extrusion and homeostasis in chloroplasts in a light-dependent manner to modulate photosynthesis. Prevents excessive induction of non-photochemical quenching (NPQ) under continuous-light conditions. Indirectly promotes efficient inorganic carbon uptake into chloroplasts. This is Potassium/proton antiporter CemA from Cyanidioschyzon merolae (strain NIES-3377 / 10D) (Unicellular red alga).